The primary structure comprises 796 residues: Lon protease 2 (796 aa).

The Lon N-terminal domain maps to 9-206; the sequence is LPIVILKENV…KLIVNLSIEI (198 aa). Residue 352–359 participates in ATP binding; sequence GPPGIGKT. The Lon proteolytic domain occupies 617 to 796; sequence IDSSGFVYGL…EEVFDYLNII (180 aa). Active-site residues include S702 and K745.

The protein belongs to the peptidase S16 family. In terms of assembly, homohexamer. Organized in a ring with a central cavity.

It localises to the cytoplasm. It catalyses the reaction Hydrolysis of proteins in presence of ATP.. ATP-dependent serine protease that mediates the selective degradation of mutant and abnormal proteins as well as certain short-lived regulatory proteins. Required for cellular homeostasis and for survival from DNA damage and developmental changes induced by stress. Degrades polypeptides processively to yield small peptide fragments that are 5 to 10 amino acids long. Binds to DNA in a double-stranded, site-specific manner. The sequence is that of Lon protease 2 (lon2) from Borreliella burgdorferi (strain ATCC 35210 / DSM 4680 / CIP 102532 / B31) (Borrelia burgdorferi).